Reading from the N-terminus, the 132-residue chain is L-ectoine synthase (132 aa).

This sequence belongs to the ectoine synthase family.

It carries out the reaction (2S)-4-acetamido-2-aminobutanoate = L-ectoine + H2O. Its pathway is amine and polyamine biosynthesis; ectoine biosynthesis; L-ectoine from L-aspartate 4-semialdehyde: step 3/3. Functionally, catalyzes the circularization of gamma-N-acetyl-alpha,gamma-diaminobutyric acid (ADABA) to ectoine (1,4,5,6-tetrahydro-2-methyl-4-pyrimidine carboxylic acid), which is an excellent osmoprotectant. This is L-ectoine synthase from Teredinibacter turnerae (strain ATCC 39867 / T7901).